The primary structure comprises 426 residues: Protein TolB homolog (426 aa).

Residues 1-19 (MFLRSFLCLLCLLPSILYC) form the signal peptide.

The protein belongs to the TolB family.

It is found in the periplasm. This is Protein TolB homolog from Chlamydia muridarum (strain MoPn / Nigg).